The chain runs to 366 residues: MAELQQLQEFEIPTGREALRGNHSALLRVADYCEDNYVQATDKRKALEETMAFTTQALASVAYQVGNLAGHTLRMLDLQGAALRQVEARVSTLGQMVNMHMEKVARREIGTLATVQRLPPGQKVIAPENLPPLTPYCRRPLNFGCLDDIGHGIKDLSTQLSRTGTLSRKSIKAPATPASATLGRPPRIPEPVHLPVVPDGRLSAASSAFSLASAGSAEGVGGAPTPKGQAAPPAPPLPSSLDPPPPPAAVEVFQRPPTLEELSPPPPDEELPLPLDLPPPPPLDGDELGLPPPPPGFGPDEPSWVPASYLEKVVTLYPYTSQKDNELSFSEGTVICVTRRYSDGWCEGVSSEGTGFFPGNYVEPSC.

Residues 33–61 are a coiled coil; it reads CEDNYVQATDKRKALEETMAFTTQALASV. The tract at residues 161–195 is disordered; that stretch reads SRTGTLSRKSIKAPATPASATLGRPPRIPEPVHLP. A phosphoserine mark is found at Ser-213 and Ser-216. A disordered region spans residues 215–302; sequence GSAEGVGGAP…PPPGFGPDEP (88 aa). Residues 232–248 are compositionally biased toward pro residues; sequence PPAPPLPSSLDPPPPPA. Residues 308 to 366 enclose the SH3 domain; the sequence is SYLEKVVTLYPYTSQKDNELSFSEGTVICVTRRYSDGWCEGVSSEGTGFFPGNYVEPSC. At Ser-342 the chain carries Phosphoserine.

It belongs to the ABI family. May interact with PAK1 and PAK2. Probably interacts with TARSH. Expressed in heart, lung, liver, pancreas, kidney, placenta and at low levels in brain and skeletal muscle.

It localises to the cytoplasm. In terms of biological role, may inhibit tumor metastasis. In vitro, reduces cell motility. This chain is ABI gene family member 3 (ABI3), found in Homo sapiens (Human).